Reading from the N-terminus, the 273-residue chain is Protein FAM210A (273 aa).

The interval 94 to 116 is disordered; it reads RVLSSSSTSQETPSEKKEETDPL. Basic and acidic residues predominate over residues 106 to 116; it reads PSEKKEETDPL. One can recognise a DUF1279 domain in the interval 118-230; the sequence is DKSISLYQRF…GYMSTPPPVK (113 aa). Residues 138–158 traverse the membrane as a helical segment; that stretch reads LIPVHLITSGIWFGTFYYATI. Residues 233 to 269 are a coiled coil; the sequence is LQGRMEETKELITEKMEETKDRLTEKLQETKGKVSFK.

Belongs to the FAM210 family. In terms of assembly, interacts with ATAD3A. As to expression, expressed in skeletal muscle, heart, brain but not in bone.

The protein localises to the membrane. Its subcellular location is the mitochondrion. It is found in the cytoplasm. May play a role in the structure and strength of both muscle and bone. This is Protein FAM210A (Fam210a) from Mus musculus (Mouse).